The sequence spans 635 residues: Transaminated amino acid decarboxylase (635 aa).

Residue Lys588 forms a Glycyl lysine isopeptide (Lys-Gly) (interchain with G-Cter in ubiquitin) linkage.

It belongs to the TPP enzyme family. The cofactor is Mg(2+). Requires thiamine diphosphate as cofactor.

The protein resides in the cytoplasm. It carries out the reaction 4-methyl-2-oxopentanoate + H(+) = 3-methylbutanal + CO2. It catalyses the reaction (S)-3-methyl-2-oxopentanoate + H(+) = 2-methylbutanal + CO2. The enzyme catalyses indole-3-pyruvate + H(+) = indole-3-acetaldehyde + CO2. The catalysed reaction is 3-phenylpyruvate + H(+) = 2-phenylacetaldehyde + CO2. It carries out the reaction 4-methylsulfanyl-2-oxobutanoate + H(+) = 3-methylsulfanylpropanal + CO2. It catalyses the reaction 3-(4-hydroxyphenyl)pyruvate + H(+) = (4-hydroxyphenyl)acetaldehyde + CO2. The protein operates within amino-acid degradation; Ehrlich pathway. Functionally, one of five 2-oxo acid decarboxylases (PDC1, PDC5, PDC6, ARO10, and THI3) involved in amino acid catabolism. The enzyme catalyzes the decarboxylation of amino acids, which, in a first step, have been transaminated to the corresponding 2-oxo acids (alpha-keto-acids). In a third step, the resulting aldehydes are reduced to alcohols, collectively referred to as fusel oils or alcohols. Its preferred substrates are the transaminated amino acids derived from phenylalanine (phenylpyruvate), tryptophan (3-(indol-3-yl)pyruvate), and probably tyrosine (4-hydroxyphenylpyruvate), but also isoleucine ((3S)-3-methyl-2-oxopentanoate, also alpha-keto-beta-methylvalerate) and methionine (4-methylthio-2-oxobutanoate), whereas transaminated leucine (4-methyl-2-oxopentanoate, also alpha-keto-isocaproate) is a low efficiency substrate and transaminated valine and pyruvate are no substrates. In analogy to the pyruvate decarboxylases the enzyme may in a side-reaction catalyze condensation (or carboligation) reactions leading to the formation of 2-hydroxy ketone, collectively called acyloins. In Saccharomyces cerevisiae (strain ATCC 204508 / S288c) (Baker's yeast), this protein is Transaminated amino acid decarboxylase (ARO10).